The following is a 295-amino-acid chain: Inositol monophosphatase 1 (295 aa).

The Mg(2+) site is built by E73, D92, I94, D95, and D231. Residue E73 participates in substrate binding. Substrate contacts are provided by residues 94 to 97 (IDGT) and D231.

The protein belongs to the inositol monophosphatase superfamily. Mg(2+) serves as cofactor.

Its subcellular location is the cytoplasm. It localises to the nucleus. It catalyses the reaction a myo-inositol phosphate + H2O = myo-inositol + phosphate. Its pathway is polyol metabolism; myo-inositol biosynthesis; myo-inositol from D-glucose 6-phosphate: step 2/2. With respect to regulation, inhibited by Li(+) and Na(+). In terms of biological role, responsible for the provision of inositol required for synthesis of phosphatidylinositol and polyphosphoinositides. This Saccharomyces cerevisiae (strain ATCC 204508 / S288c) (Baker's yeast) protein is Inositol monophosphatase 1 (INM1).